The primary structure comprises 426 residues: Phosphomethylpyrimidine synthase (426 aa).

Residues asparagine 65, methionine 94, tyrosine 123, histidine 162, 184-186 (SRG), 225-228 (DGMR), and glutamate 264 contribute to the substrate site. A Zn(2+)-binding site is contributed by histidine 268. Tyrosine 291 is a binding site for substrate. Histidine 332 contacts Zn(2+). Residues cysteine 408, cysteine 411, and cysteine 415 each contribute to the [4Fe-4S] cluster site.

The protein belongs to the ThiC family. [4Fe-4S] cluster is required as a cofactor.

It carries out the reaction 5-amino-1-(5-phospho-beta-D-ribosyl)imidazole + S-adenosyl-L-methionine = 4-amino-2-methyl-5-(phosphooxymethyl)pyrimidine + CO + 5'-deoxyadenosine + formate + L-methionine + 3 H(+). It functions in the pathway cofactor biosynthesis; thiamine diphosphate biosynthesis. In terms of biological role, catalyzes the synthesis of the hydroxymethylpyrimidine phosphate (HMP-P) moiety of thiamine from aminoimidazole ribotide (AIR) in a radical S-adenosyl-L-methionine (SAM)-dependent reaction. This Methanococcus vannielii (strain ATCC 35089 / DSM 1224 / JCM 13029 / OCM 148 / SB) protein is Phosphomethylpyrimidine synthase.